Here is an 868-residue protein sequence, read N- to C-terminus: Sporulation-specific protein 75 (868 aa).

The Extracellular portion of the chain corresponds to 1-34; that stretch reads MNATKELTFNLLNKFQDKERFGSAQRHAGISLKG. Residue asparagine 2 is glycosylated (N-linked (GlcNAc...) asparagine). Residues 35–55 form a helical membrane-spanning segment; it reads FISGILFSFLYFLFQLSLFII. Residues 56–127 are Cytoplasmic-facing; that stretch reads LRSRFKTIYQ…DNYLFLRFLK (72 aa). A helical transmembrane segment spans residues 128–148; that stretch reads LLIFFFAVLSIINIPILIPIH. Over 149–187 the chain is Extracellular; sequence YFSRDILKENEGERYEQSFRTTSKLDKWTMSNLSPNSSN. An N-linked (GlcNAc...) asparagine glycan is attached at asparagine 184. A helical transmembrane segment spans residues 188–208; that stretch reads TLICHLFLSIFVVLWFHFILS. Topologically, residues 209-481 are cytoplasmic; it reads SELRFVNRLG…AKYFSANILR (273 aa). Residues 482 to 502 form a helical membrane-spanning segment; that stretch reads IFVIIGWILPVAFLGLISQIP. Asparagine 503 is a glycosylation site (N-linked (GlcNAc...) asparagine). Residues 503–527 are Extracellular-facing; it reads NISSLIPFTKIIHFQSPFIREVAKN. A helical membrane pass occupies residues 528-548; sequence LIPIVTLIIIIEIVPYFFRWL. The Cytoplasmic portion of the chain corresponds to 549-569; it reads SYLRGLKTGAQIEADVQNWYF. The helical transmembrane segment at 570-590 threads the bilayer; sequence VFVFIHLFVVVTISSGFSIII. The Extracellular segment spans residues 591–611; that stretch reads ERLLNNPVSIPALLANDLPKC. Residues 612 to 632 traverse the membrane as a helical segment; it reads ANFFCSFVLIRGMAYAGGNLL. Residues 633 to 660 are Cytoplasmic-facing; the sequence is RIKELLFELFYYKWKRSTPHAQFKRLKT. Residues 661-683 form a helical membrane-spanning segment; it reads SLFFQLGSIYPIFSVLGCIGIIY. Residues 684-692 are Extracellular-facing; the sequence is SVVAPIILL. A helical membrane pass occupies residues 693 to 713; the sequence is LCCISFSMVFFSFSYLFKYQY. Topologically, residues 714–730 are cytoplasmic; it reads NKENYSETFGKLYIQAL. A helical membrane pass occupies residues 731 to 751; the sequence is MQLYAGIYFMEFCLLGLFTLF. The Extracellular portion of the chain corresponds to 752 to 753; it reads DQ. A helical transmembrane segment spans residues 754–774; the sequence is YTLSTIMLVVFALTVITHSKI. At 775–868 the chain is on the cytoplasmic side; it reads SKQIKSKPQR…DCHLENSHLH (94 aa).

The protein belongs to the CSC1 (TC 1.A.17) family.

The protein localises to the membrane. Acts as an osmosensitive calcium-permeable cation channel. Required for spore wall assembly and ascus formation. This Saccharomyces cerevisiae (strain ATCC 204508 / S288c) (Baker's yeast) protein is Sporulation-specific protein 75 (SPO75).